The primary structure comprises 66 residues: Pancreatic polypeptide prohormone (66 aa).

Tyrosine amide is present on Tyr36. Residues 60–66 constitute a propeptide that is removed on maturation; the sequence is ELSPMDV.

The protein belongs to the NPY family.

Its subcellular location is the secreted. Functionally, hormone secreted by pancreatic cells that acts as a regulator of pancreatic and gastrointestinal functions probably by signaling through the G protein-coupled receptor NPY4R2. The polypeptide is Pancreatic polypeptide prohormone (PPY) (Felis catus (Cat)).